A 696-amino-acid chain; its full sequence is UV radiation resistance-associated gene protein (696 aa).

Residues S214 and S218 each carry the phosphoserine modification. Coiled-coil stretches lie at residues 251-278 (LLTLQRLQRLHQQKRRQMAEVCREIARL) and 330-394 (NAQQ…RLEL). Phosphoserine is present on S666. Positions 666-696 (SYSDGEDEFRPRLEHNYSNSDSNITLQTERS) are disordered. Y667 bears the Phosphotyrosine mark. A phosphoserine mark is found at S668 and S685. Residues 681-696 (NYSNSDSNITLQTERS) are compositionally biased toward polar residues.

Functionally, involved in biosynthetic vesicle transport to lysosomes. Acts as a cell growth regulator. Also has a crucial role in controlling organ rotation by regulating membrane-localized Notch receptor endocytosis and subsequent degradation. Regulation of organ rotation is not by induction of autophagy. The sequence is that of UV radiation resistance-associated gene protein (Uvrag) from Drosophila melanogaster (Fruit fly).